An 845-amino-acid polypeptide reads, in one-letter code: Meiotically up-regulated gene 4 protein (845 aa).

The interval 122–158 is disordered; that stretch reads LSTTDEQPKEPSIISISSSSSDPSSSPPPSSSLLKTP. The span at 132 to 145 shows a compositional bias: low complexity; sequence PSIISISSSSSDPS. A helical membrane pass occupies residues 726 to 746; the sequence is FLVFLTFTGMTLFILYQLTFP.

Its subcellular location is the membrane. Has a role in meiosis. The sequence is that of Meiotically up-regulated gene 4 protein (mug4) from Schizosaccharomyces pombe (strain 972 / ATCC 24843) (Fission yeast).